Here is a 315-residue protein sequence, read N- to C-terminus: MQVTFLGTSSGVPTRGRNVSSVALRLPQRSELWLFDCGEGTQHQFLRCDLRLSQLRRVFITHMHGDHVFGLPGLLASLGLGSTSNGVDLYGPDPLDAYLQGVLRTSSTRIGYPLAIHRVREAAEQNTVVFEDDDLIVTAAPLNHRVPAYAYRAEQKPRAGRFDIDKARELQIPPGPVYAALKRGESVTLDDGRTIDGRTLCGPEQPGVSVVYCTDTVFCEAAVQLAQGADLLIHESTFSHAEADMAFKRQHSTSTMAAQTAAEAGVKQLALTHLSPRYAPGNAVTADDLVAEASAIFPNTILARDFLNVDVNPSK.

Residues histidine 62, histidine 64, aspartate 66, histidine 67, histidine 144, aspartate 215, and histidine 273 each coordinate Zn(2+). The active-site Proton acceptor is aspartate 66.

The protein belongs to the RNase Z family. In terms of assembly, homodimer. It depends on Zn(2+) as a cofactor.

The catalysed reaction is Endonucleolytic cleavage of RNA, removing extra 3' nucleotides from tRNA precursor, generating 3' termini of tRNAs. A 3'-hydroxy group is left at the tRNA terminus and a 5'-phosphoryl group is left at the trailer molecule.. Functionally, zinc phosphodiesterase, which displays some tRNA 3'-processing endonuclease activity. Probably involved in tRNA maturation, by removing a 3'-trailer from precursor tRNA. The polypeptide is Ribonuclease Z (Synechococcus sp. (strain CC9311)).